Consider the following 241-residue polypeptide: DNA repair protein RecO (241 aa).

The protein belongs to the RecO family.

Functionally, involved in DNA repair and RecF pathway recombination. The polypeptide is DNA repair protein RecO (Yersinia pseudotuberculosis serotype O:1b (strain IP 31758)).